Here is a 414-residue protein sequence, read N- to C-terminus: uncharacterized protein (414 aa).

Disordered regions lie at residues 136–168 (SSKSMTPTAEKQLEKPLENGSELQEGDSLTVPT), 297–333 (PQNFPNSGMQRAVQAPRPQNKMSYHRNNKNRNAENAS), and 346–414 (ALNA…NGSK). Residues 350–359 (PSRSRPTHGS) show a composition bias toward polar residues. Basic and acidic residues predominate over residues 399-414 (SKSEKIYPEPRRNGSK).

This is an uncharacterized protein from Homo sapiens (Human).